We begin with the raw amino-acid sequence, 93 residues long: Large ribosomal subunit protein uL23 (93 aa).

It belongs to the universal ribosomal protein uL23 family. Part of the 50S ribosomal subunit. Contacts protein L29, and trigger factor when it is bound to the ribosome.

In terms of biological role, one of the early assembly proteins it binds 23S rRNA. One of the proteins that surrounds the polypeptide exit tunnel on the outside of the ribosome. Forms the main docking site for trigger factor binding to the ribosome. This chain is Large ribosomal subunit protein uL23, found in Campylobacter jejuni subsp. jejuni serotype O:2 (strain ATCC 700819 / NCTC 11168).